The primary structure comprises 116 residues: Endoribonuclease toxin ChpB (116 aa).

This sequence belongs to the PemK/MazF family. As to quaternary structure, homodimer, interacts with ChpS, which inhibits the endoribonuclease activity.

With respect to regulation, stimulated in vitro in a concentration-dependent fashion by extracellular death factor (EDF, a quorum sensing pentapeptide sequence NNWNN, probably produced from the zwf gene product glucose-6-phosphate 1-dehydrogenase), which is able to overcome inhibition by cognate antitoxin ChpS. In terms of biological role, toxic component of a type II toxin-antitoxin (TA) system. ChpB is a sequence-specific mRNA and (weak) tmRNA endoribonuclease that inhibits protein synthesis and induces bacterial stasis. Cleavage is independent of the ribosome. Cleavage occurs at ACY sequences where Y is not C. The endoribonuclease activity is not as strong as that of MazF. The endoribonuclease activity (a toxin) is inhibited by its labile cognate antitoxin ChpS. Toxicity results when the levels of ChpS decrease in the cell, leading to mRNA degradation. Both ChpS and ChpB probably bind to the promoter region of the chpS-chpB operon to autoregulate their synthesis. This chain is Endoribonuclease toxin ChpB (chpB), found in Escherichia coli (strain K12).